We begin with the raw amino-acid sequence, 223 residues long: Small ribosomal subunit protein uS5 (223 aa).

The tract at residues 1 to 48 (MPGRQRRDGGSGPAGQNGPNSGDNSNARGDNRGGGRDRRDGGRGGNAA) is disordered. Basic and acidic residues predominate over residues 29–42 (GDNRGGGRDRRDGG). The region spanning 53-116 (FIERVVTINR…EEARKSFFRV (64 aa)) is the S5 DRBM domain.

Belongs to the universal ribosomal protein uS5 family. As to quaternary structure, part of the 30S ribosomal subunit. Contacts proteins S4 and S8.

Its function is as follows. With S4 and S12 plays an important role in translational accuracy. Functionally, located at the back of the 30S subunit body where it stabilizes the conformation of the head with respect to the body. The sequence is that of Small ribosomal subunit protein uS5 from Rhodococcus erythropolis (strain PR4 / NBRC 100887).